The sequence spans 319 residues: Curved DNA-binding protein (319 aa).

The 65-residue stretch at 5–69 (DYYKILGVEP…QKRAEFDEIR (65 aa)) folds into the J domain.

It localises to the cytoplasm. It is found in the nucleoid. In terms of biological role, DNA-binding protein that preferentially recognizes a curved DNA sequence. It is probably a functional analog of DnaJ; displays overlapping activities with DnaJ, but functions under different conditions, probably acting as a molecular chaperone in an adaptive response to environmental stresses other than heat shock. Lacks autonomous chaperone activity; binds native substrates and targets them for recognition by DnaK. Its activity is inhibited by the binding of CbpM. The protein is Curved DNA-binding protein of Pseudomonas putida (strain ATCC 700007 / DSM 6899 / JCM 31910 / BCRC 17059 / LMG 24140 / F1).